Reading from the N-terminus, the 83-residue chain is Subtilisin-chymotrypsin inhibitor CI-1A (83 aa).

The disordered stretch occupies residues 1-24; the sequence is MSSMEGSVLKYPEPTEGSIGASSA.

Belongs to the protease inhibitor I13 (potato type I serine protease inhibitor) family.

In terms of biological role, inhibits both subtilisin and chymotrypsin. The polypeptide is Subtilisin-chymotrypsin inhibitor CI-1A (Hordeum vulgare (Barley)).